The following is a 354-amino-acid chain: MHPSPSSPTPQAADAVVIGAGPVGLFQVFQLGLQGIAAHLVDALPHVGGQCAELYPDKPIYDIPGIPVCTGLGLVELLQRQIAPFAPTLHLGQQIHALAAQADGRILLTTTAGTALLARSVFIAAGVGAFVPRAIKAEGVEALAPGQLLYHPDAATATRAATGKRVVVHGGDEAAVQAALDCVDAAAQVLLLHRRDAFQAAPAPLAQLQALREAGRIQVVIGQITGVETAPDGTLQALALLDPQGQPQRQPLDLLLAYLGISPRLGPIADWGLAMDRKQLAVDTATFATSVPGIYAVGDINTYPGKRKLILCGFHEATLAAFAEAERQAGHKLPLEYTTSSERLQARLGVAPAR.

Residues Asp42, Gln50, Tyr55, Ile95, Phe130, Asp299, and Thr339 each contribute to the FAD site.

This sequence belongs to the ferredoxin--NADP reductase type 2 family. As to quaternary structure, homodimer. FAD is required as a cofactor.

The enzyme catalyses 2 reduced [2Fe-2S]-[ferredoxin] + NADP(+) + H(+) = 2 oxidized [2Fe-2S]-[ferredoxin] + NADPH. This is Ferredoxin--NADP reductase from Acidovorax sp. (strain JS42).